A 271-amino-acid chain; its full sequence is MSQPQLTQEALAREAALPENLWIQCPYCKQGSYRESLGNAQVCPHCHYGFRITAKKRLSLIATATEEWDADLVTADPLDFPGYTEKLAAGQAATGLKDSVWTGQATIGGQSCALGIMDPKFMMGSLGTVTGERLTRLFEKATSANLAVVLFCASGGARMQEGIHSLMQMAKVSAAVKAHSNAGLLFISVLTDPTMGGVTASFAMQGDITLAEPHSLIGFAGRRVIEQTINQKLPQNFQRAETLLQSGFIDAVVQRQDQPSYLGDLLALHTA.

A CoA carboxyltransferase N-terminal domain is found at 21–271 (LWIQCPYCKQ…LGDLLALHTA (251 aa)). Cysteine 25, cysteine 28, cysteine 43, and cysteine 46 together coordinate Zn(2+). The C4-type zinc-finger motif lies at 25 to 46 (CPYCKQGSYRESLGNAQVCPHC).

It belongs to the AccD/PCCB family. As to quaternary structure, acetyl-CoA carboxylase is a heterohexamer composed of biotin carboxyl carrier protein (AccB), biotin carboxylase (AccC) and two subunits each of ACCase subunit alpha (AccA) and ACCase subunit beta (AccD). The cofactor is Zn(2+).

Its subcellular location is the cytoplasm. The catalysed reaction is N(6)-carboxybiotinyl-L-lysyl-[protein] + acetyl-CoA = N(6)-biotinyl-L-lysyl-[protein] + malonyl-CoA. The protein operates within lipid metabolism; malonyl-CoA biosynthesis; malonyl-CoA from acetyl-CoA: step 1/1. Its function is as follows. Component of the acetyl coenzyme A carboxylase (ACC) complex. Biotin carboxylase (BC) catalyzes the carboxylation of biotin on its carrier protein (BCCP) and then the CO(2) group is transferred by the transcarboxylase to acetyl-CoA to form malonyl-CoA. The polypeptide is Acetyl-coenzyme A carboxylase carboxyl transferase subunit beta (Lacticaseibacillus casei (strain BL23) (Lactobacillus casei)).